Here is a 297-residue protein sequence, read N- to C-terminus: Thiosulfate sulfurtransferase (297 aa).

Residue Lys14 is modified to N6-acetyllysine; alternate. An N6-succinyllysine; alternate modification is found at Lys14. The Rhodanese 1 domain maps to 25-143; that stretch reads VGPSLRVLDA…WLKEGHPVTS (119 aa). O-linked (GlcNAc) serine glycosylation occurs at Ser35. Ser38 carries the post-translational modification Phosphoserine. An N6-acetyllysine; alternate modification is found at Lys136. Lys136 is modified (N6-succinyllysine; alternate). The hinge stretch occupies residues 144 to 159; the sequence is EPSRPEPAVFKATLNR. Residue Lys163 is modified to N6-acetyllysine. Positions 173 to 288 constitute a Rhodanese 2 domain; the sequence is QSKRFQLVDS…WFRRAPPETR (116 aa). The residue at position 175 (Lys175) is an N6-acetyllysine; alternate. At Lys175 the chain carries N6-succinyllysine; alternate. Residue Arg187 coordinates substrate. Residue Lys224 is modified to N6-acetyllysine; alternate. Lys224 carries the N6-succinyllysine; alternate modification. Lys236 is subject to N6-acetyllysine. Lys237 is subject to N6-acetyllysine; alternate. Lys237 is modified (N6-succinyllysine; alternate). Residue Cys248 is the Cysteine persulfide intermediate of the active site. Residue Lys250 coordinates substrate.

As to quaternary structure, monomer. As to expression, expressed in numerous tissues.

It localises to the mitochondrion matrix. The catalysed reaction is thiosulfate + hydrogen cyanide = thiocyanate + sulfite + 2 H(+). Its function is as follows. Together with MRPL18, acts as a mitochondrial import factor for the cytosolic 5S rRNA. Only the nascent unfolded cytoplasmic form is able to bind to the 5S rRNA. Involved in the formation of iron-sulfur complexes, cyanide detoxification or modification of sulfur-containing enzymes. Other thiol compounds, besides cyanide, can act as sulfur ion acceptors. Also has weak mercaptopyruvate sulfurtransferase (MST) activity. This chain is Thiosulfate sulfurtransferase (Tst), found in Rattus norvegicus (Rat).